We begin with the raw amino-acid sequence, 279 residues long: Thymidylate synthase (279 aa).

132–133 (RR) is a dUMP binding site. Cys-153 serves as the catalytic Nucleophile. Residues 178-181 (RSND), Asn-189, and 219-221 (HIY) each bind dUMP. Asp-181 is a (6R)-5,10-methylene-5,6,7,8-tetrahydrofolate binding site. (6R)-5,10-methylene-5,6,7,8-tetrahydrofolate is bound at residue Ala-278.

The protein belongs to the thymidylate synthase family. Bacterial-type ThyA subfamily. In terms of assembly, homodimer.

The protein localises to the cytoplasm. The catalysed reaction is dUMP + (6R)-5,10-methylene-5,6,7,8-tetrahydrofolate = 7,8-dihydrofolate + dTMP. It participates in pyrimidine metabolism; dTTP biosynthesis. In terms of biological role, catalyzes the reductive methylation of 2'-deoxyuridine-5'-monophosphate (dUMP) to 2'-deoxythymidine-5'-monophosphate (dTMP) while utilizing 5,10-methylenetetrahydrofolate (mTHF) as the methyl donor and reductant in the reaction, yielding dihydrofolate (DHF) as a by-product. This enzymatic reaction provides an intracellular de novo source of dTMP, an essential precursor for DNA biosynthesis. The chain is Thymidylate synthase from Lactococcus lactis subsp. lactis (strain IL1403) (Streptococcus lactis).